A 194-amino-acid polypeptide reads, in one-letter code: MPQHTELVVLLDDDGETIGTAPKATVHTRDTALHLAFSCHVFDAQGRILVTRRAIGKLTWPGVWTNSFCGHPAPDEDMREAVHRRAEQELGLELESVELVLPDFRYRATDAAGVVENEICPVFRAVAASPVDPRPEEVGEYQWVDPEQLIPAVAHTPWAFSPWLTLQLPLLYPEHAAHSGLAETAAAAAAVPAA.

Mn(2+) is bound by residues His27 and His34. One can recognise a Nudix hydrolase domain in the interval 32-166; it reads ALHLAFSCHV…PWAFSPWLTL (135 aa). Cys69 is a catalytic residue. His71 provides a ligand contact to Mn(2+). Glu89 contacts Mg(2+). The Mn(2+) site is built by Glu116 and Glu118. Glu118 is an active-site residue.

This sequence belongs to the IPP isomerase type 1 family. Mg(2+) is required as a cofactor. It depends on Mn(2+) as a cofactor.

Its subcellular location is the cytoplasm. The enzyme catalyses isopentenyl diphosphate = dimethylallyl diphosphate. It participates in isoprenoid biosynthesis; dimethylallyl diphosphate biosynthesis; dimethylallyl diphosphate from isopentenyl diphosphate: step 1/1. Its function is as follows. Catalyzes the 1,3-allylic rearrangement of the homoallylic substrate isopentenyl (IPP) to its highly electrophilic allylic isomer, dimethylallyl diphosphate (DMAPP). The polypeptide is Isopentenyl-diphosphate Delta-isomerase (Clavibacter michiganensis subsp. michiganensis (strain NCPPB 382)).